We begin with the raw amino-acid sequence, 505 residues long: Aminoaldehyde dehydrogenase 1a (505 aa).

Aspartate 101 serves as a coordination point for Na(+). Residues 161 to 163 and 187 to 190 each bind NAD(+); these read TPW and KPSE. Leucine 191 contacts Na(+). Residues 241-244 and glutamate 262 each bind NAD(+); that span reads SFET. Glutamate 262 functions as the Proton acceptor in the catalytic mechanism. Residue cysteine 296 is the Nucleophile of the active site. Residues glutamate 395 and tryptophan 461 each contribute to the NAD(+) site.

The protein belongs to the aldehyde dehydrogenase family. In terms of assembly, forms homodimers.

It carries out the reaction 4-aminobutanal + NAD(+) + H2O = 4-aminobutanoate + NADH + 2 H(+). The enzyme catalyses 3-aminopropanal + NAD(+) + H2O = beta-alanine + NADH + 2 H(+). It catalyses the reaction 4-(trimethylamino)butanal + NAD(+) + H2O = 4-(trimethylamino)butanoate + NADH + 2 H(+). The catalysed reaction is 4-guanidinobutanal + NAD(+) + H2O = 4-guanidinobutanoate + NADH + 2 H(+). It carries out the reaction betaine aldehyde + NAD(+) + H2O = glycine betaine + NADH + 2 H(+). It participates in amine and polyamine biosynthesis; betaine biosynthesis via choline pathway; betaine from betaine aldehyde: step 1/1. Dehydrogenase that catalyzes the oxidation of several aminoaldehydes. Metabolizes and detoxifies aldehyde products of polyamine degradation to non-toxic amino acids. Catalyzes the oxidation of 4-aminobutanal and 3-aminopropanal to 4-aminobutanoate and beta-alanine, respectively. Catalyzes the oxidation of 4-(trimethylamino)butanal and 4-guanidinobutanal to 4-trimethylammoniobutanoate and 4-guanidinobutanoate, respectively. Catalyzes the oxidation of betaine aldehyde to glycine betaine. In terms of biological role, dehydrogenase that catalyzes the oxidation of several aminoaldehydes. Catalyzes the oxidation of betaine aldehyde to glycine betaine. Catalyzes the oxidation of 4-(trimethylamino)butanal to 4-trimethylammoniobutanoate. The protein is Aminoaldehyde dehydrogenase 1a of Zea mays (Maize).